The primary structure comprises 331 residues: Anthranilate phosphoribosyltransferase (331 aa).

Residues G78, 81-82 (GD), T86, 88-91 (NVST), 106-114 (KHGNYSVSS), and S118 contribute to the 5-phospho-alpha-D-ribose 1-diphosphate site. Position 78 (G78) interacts with anthranilate. S90 serves as a coordination point for Mg(2+). N109 provides a ligand contact to anthranilate. R164 is an anthranilate binding site. Positions 222 and 223 each coordinate Mg(2+).

Belongs to the anthranilate phosphoribosyltransferase family. As to quaternary structure, homodimer. Mg(2+) serves as cofactor.

The catalysed reaction is N-(5-phospho-beta-D-ribosyl)anthranilate + diphosphate = 5-phospho-alpha-D-ribose 1-diphosphate + anthranilate. Its pathway is amino-acid biosynthesis; L-tryptophan biosynthesis; L-tryptophan from chorismate: step 2/5. Catalyzes the transfer of the phosphoribosyl group of 5-phosphorylribose-1-pyrophosphate (PRPP) to anthranilate to yield N-(5'-phosphoribosyl)-anthranilate (PRA). In Haloferax volcanii (strain ATCC 29605 / DSM 3757 / JCM 8879 / NBRC 14742 / NCIMB 2012 / VKM B-1768 / DS2) (Halobacterium volcanii), this protein is Anthranilate phosphoribosyltransferase.